A 915-amino-acid polypeptide reads, in one-letter code: Protein translocase subunit SecA (915 aa).

ATP is bound by residues glutamine 87, 105 to 109 (GEGKT), and aspartate 512. Positions 849–864 (AAQQQARQAPLPNAPA) are enriched in low complexity. The segment at 849–915 (AAQQQARQAP…CHGSRAKDHA (67 aa)) is disordered. Residues 876 to 891 (PEEKVARVAAERHIGR) are compositionally biased toward basic and acidic residues. 4 residues coordinate Zn(2+): cysteine 895, cysteine 897, cysteine 906, and histidine 907.

Belongs to the SecA family. Monomer and homodimer. Part of the essential Sec protein translocation apparatus which comprises SecA, SecYEG and auxiliary proteins SecDF-YajC and YidC. Zn(2+) serves as cofactor.

Its subcellular location is the cell inner membrane. The protein localises to the cytoplasm. It catalyses the reaction ATP + H2O + cellular proteinSide 1 = ADP + phosphate + cellular proteinSide 2.. Functionally, part of the Sec protein translocase complex. Interacts with the SecYEG preprotein conducting channel. Has a central role in coupling the hydrolysis of ATP to the transfer of proteins into and across the cell membrane, serving both as a receptor for the preprotein-SecB complex and as an ATP-driven molecular motor driving the stepwise translocation of polypeptide chains across the membrane. This is Protein translocase subunit SecA from Actinobacillus succinogenes (strain ATCC 55618 / DSM 22257 / CCUG 43843 / 130Z).